Here is a 579-residue protein sequence, read N- to C-terminus: Deleted in azoospermia protein 4 (579 aa).

A compositionally biased stretch (polar residues) spans Met-1 to Asn-10. The disordered stretch occupies residues Met-1–Ser-27. Over residues Ser-11–Ser-27 the composition is skewed to low complexity. Residues Asn-40 to Arg-115 form the RRM 1 domain. Positions Gln-163–Asn-175 are enriched in polar residues. The disordered stretch occupies residues Gln-163 to Ser-192. A compositionally biased stretch (low complexity) spans Ser-176–Ser-192. The RRM 2 domain maps to Asn-205–Arg-280. 9 DAZ domains span residues Ala-332–Gln-355, Glu-356–Gln-379, Pro-380–Gln-403, Ala-404–Gln-427, Pro-428–Gln-451, Ala-452–Gln-475, Ala-476–Gln-499, Ala-500–Gln-523, and Ala-524–Gln-547.

It belongs to the RRM DAZ family. As to quaternary structure, forms a heterodimer with BOLL and DAZL. Interacts with PUM2, DAZAP1, DAZAP2, DZIP1 and DZIP3. In terms of tissue distribution, testis-specific. Expression restricted to premeiotic germ cells, particularly in spermatogonia (at protein level).

It is found in the cytoplasm. Its subcellular location is the nucleus. Its function is as follows. RNA-binding protein that plays an essential role in spermatogenesis. May act by binding to the 3'-UTR of mRNAs and regulating their translation. This Homo sapiens (Human) protein is Deleted in azoospermia protein 4 (DAZ4).